Consider the following 482-residue polypeptide: ATP synthase subunit beta (482 aa).

162–169 is an ATP binding site; that stretch reads GGAGVGKT.

As to quaternary structure, F-type ATPases have 2 components, CF(1) - the catalytic core - and CF(0) - the membrane proton channel. CF(1) has five subunits: alpha(3), beta(3), gamma(1), delta(1), epsilon(1). CF(0) has four main subunits: a(1), b(1), b'(1) and c(9-12).

Its subcellular location is the cellular thylakoid membrane. The catalysed reaction is ATP + H2O + 4 H(+)(in) = ADP + phosphate + 5 H(+)(out). Inhibited by dicyclohexylcarbodiimide. Produces ATP from ADP in the presence of a proton gradient across the membrane. The catalytic sites are hosted primarily by the beta subunits. Functionally, the complex from the organism is particularly stable to disruption and remains functional after 6 hrs at 55 degrees Celsius. This is ATP synthase subunit beta from Thermosynechococcus vestitus (strain NIES-2133 / IAM M-273 / BP-1).